Reading from the N-terminus, the 363-residue chain is uncharacterized protein (363 aa).

A coiled-coil region spans residues 109–329 (RAALRELRSR…VEELQAQTRE (221 aa)).

This is an uncharacterized protein from Homo sapiens (Human).